The chain runs to 397 residues: Argininosuccinate synthase (397 aa).

An ATP-binding site is contributed by 9–17 (AYSGGLDTS). Y86 is an L-citrulline binding site. Residue G116 participates in ATP binding. L-aspartate is bound by residues T118, N122, and D123. Residue N122 coordinates L-citrulline. 4 residues coordinate L-citrulline: R126, S174, E259, and Y271.

The protein belongs to the argininosuccinate synthase family. Type 1 subfamily. As to quaternary structure, homotetramer.

It localises to the cytoplasm. The catalysed reaction is L-citrulline + L-aspartate + ATP = 2-(N(omega)-L-arginino)succinate + AMP + diphosphate + H(+). The protein operates within amino-acid biosynthesis; L-arginine biosynthesis; L-arginine from L-ornithine and carbamoyl phosphate: step 2/3. This Lactococcus lactis subsp. cremoris (strain MG1363) protein is Argininosuccinate synthase.